Reading from the N-terminus, the 67-residue chain is Ranatuerin-2Vb (67 aa).

Positions 1-22 are cleaved as a signal peptide; sequence MFTLKKSFLLLFFLGTITLSLC. Positions 23-39 are excised as a propeptide; that stretch reads EEERGADDDDGEEEVKR. A disulfide bond links C62 and C67.

As to expression, expressed by the skin glands.

It is found in the secreted. In terms of biological role, antimicrobial peptide. This is Ranatuerin-2Vb from Odorrana versabilis (Chinese bamboo leaf odorous frog).